Reading from the N-terminus, the 145-residue chain is Large ribosomal subunit protein uL16 (145 aa).

The segment covering 1 to 17 (MLMPKRVKHRKVQRGRM) has biased composition (basic residues). A disordered region spans residues 1-20 (MLMPKRVKHRKVQRGRMKGV).

This sequence belongs to the universal ribosomal protein uL16 family. As to quaternary structure, part of the 50S ribosomal subunit.

Binds 23S rRNA and is also seen to make contacts with the A and possibly P site tRNAs. This Acetivibrio thermocellus (strain ATCC 27405 / DSM 1237 / JCM 9322 / NBRC 103400 / NCIMB 10682 / NRRL B-4536 / VPI 7372) (Clostridium thermocellum) protein is Large ribosomal subunit protein uL16.